The sequence spans 207 residues: Ras-related protein Rab-8A (207 aa).

GTP contacts are provided by serine 17, glycine 18, valine 19, glycine 20, lysine 21, threonine 22, cysteine 23, serine 35, serine 39, and threonine 40. Threonine 22 is a binding site for Mg(2+). Short sequence motifs (switch) lie at residues 31 to 45 and 63 to 80; these read DAFN…GIDF and DTAG…YYRG. Residues threonine 40 and aspartate 63 each coordinate Mg(2+). Residue glycine 66 coordinates GTP. Threonine 72 is subject to Phosphothreonine; by LRRK2. 5 residues coordinate GTP: asparagine 121, lysine 122, aspartate 124, alanine 152, and lysine 153. Phosphoserine occurs at positions 181 and 185. Cysteine methyl ester is present on cysteine 204. Cysteine 204 carries S-geranylgeranyl cysteine lipidation. Residues 205 to 207 constitute a propeptide, removed in mature form; it reads SLL.

It belongs to the small GTPase superfamily. Rab family. Interacts (GTP-bound form) with MICALL1; regulates RAB8A association with recycling endosomes. Interacts with MICALL2; competes with RAB13 and is involved in E-cadherin endocytic recycling. Interacts (GTP-bound form) with MICAL1, MICALCL, MICAL3 and EHBP1L1; two molecules of RAB8A can bind to one molecule of the effector protein; ternary complexes of RAB8A, RAB13 and either MICAL1 or EHBP1L1 are possible. Interacts (GTP-bound form) with EHBP1. Interacts with EHD1. Interacts with MAP4K2 and SYTL4. Interacts with SGSM1 and SGSM3. Interacts with RABIF, RIMS2, RPH3A and RPH3A. Interacts with OPTN. Interacts with MYO5B. Interacts with CIMAP3. Interacts with BIRC6/bruce. Interacts with OCRL. Interacts with AHI1. Interacts with DCDC1. Interacts with LRRK2; interaction facilitates phosphorylation of Thr-72. Interacts with RAB31P, GDI1, GDI2, CHM, CHML, RABGGTA, RABGGTB, TBC1D15 and INPP5B; these interactions are dependent on Thr-72 not being phosphorylated. Interacts with RILPL1 and RILPL2; these interactions are dependent on the phosphorylation of Thr-72 by LRRK2. Interacts with DZIP1; prevents inhibition by the GDP-dissociation inhibitor GDI2. Interacts with RAB3IP/Rabin8, RAB3IP functions as guanine exchange factor (GEF) towards RAB8A. Interacts (in GDP-bound form) with RPGR, RPGR functions as GEF towards RAB8A. Requires Mg(2+) as cofactor. Phosphorylation of Thr-72 in the switch II region by LRRK2 prevents the association of RAB regulatory proteins, including CHM, CHML and RAB GDP dissociation inhibitors GDI1 and GDI2. Phosphorylation by LRRK2 is required for localization to stressed lysosomes.

It localises to the cell membrane. Its subcellular location is the golgi apparatus. The protein resides in the endosome membrane. It is found in the recycling endosome membrane. The protein localises to the cell projection. It localises to the cilium. Its subcellular location is the cytoplasmic vesicle. The protein resides in the phagosome membrane. It is found in the cytoplasm. The protein localises to the cytoskeleton. It localises to the microtubule organizing center. Its subcellular location is the centrosome. The protein resides in the centriole. It is found in the cilium basal body. The protein localises to the midbody. It localises to the lysosome. It catalyses the reaction GTP + H2O = GDP + phosphate + H(+). With respect to regulation, regulated by guanine nucleotide exchange factors (GEFs) such as RAB3IP/Rabin8 and RPGR which promote the exchange of bound GDP for free GTP, GTPase activating proteins (GAPs) which increase the GTP hydrolysis activity, and GDP dissociation inhibitors (GDIs) which inhibit the dissociation of the nucleotide from the GTPase. Activated in response to insulin. Its function is as follows. The small GTPases Rab are key regulators of intracellular membrane trafficking, from the formation of transport vesicles to their fusion with membranes. Rabs cycle between an inactive GDP-bound form and an active GTP-bound form that is able to recruit to membranes different sets of downstream effectors directly responsible for vesicle formation, movement, tethering and fusion. RAB8A is involved in polarized vesicular trafficking and neurotransmitter release. Together with RAB11A, RAB3IP, the exocyst complex, PARD3, PRKCI, ANXA2, CDC42 and DNMBP promotes transcytosis of PODXL to the apical membrane initiation sites (AMIS), apical surface formation and lumenogenesis. Regulates the compacted morphology of the Golgi. Together with MYO5B and RAB11A participates in epithelial cell polarization. Also involved in membrane trafficking to the cilium and ciliogenesis. Together with MICALL2, may also regulate adherens junction assembly. May play a role in insulin-induced transport to the plasma membrane of the glucose transporter GLUT4 and therefore play a role in glucose homeostasis. Involved in autophagy. Participates in the export of a subset of neosynthesized proteins through a Rab8-Rab10-Rab11-dependent endososomal export route. Targeted to and stabilized on stressed lysosomes through LRRK2 phosphorylation. Suppresses stress-induced lysosomal enlargement through EHBP1 and EHNP1L1 effector proteins. This is Ras-related protein Rab-8A from Mus musculus (Mouse).